The sequence spans 215 residues: Urease accessory protein UreG (215 aa).

GTP is bound at residue 24–31 (GPVGSGKT).

It belongs to the SIMIBI class G3E GTPase family. UreG subfamily. In terms of assembly, homodimer. UreD, UreF and UreG form a complex that acts as a GTP-hydrolysis-dependent molecular chaperone, activating the urease apoprotein by helping to assemble the nickel containing metallocenter of UreC. The UreE protein probably delivers the nickel.

It localises to the cytoplasm. In terms of biological role, facilitates the functional incorporation of the urease nickel metallocenter. This process requires GTP hydrolysis, probably effectuated by UreG. The polypeptide is Urease accessory protein UreG (Burkholderia cenocepacia (strain HI2424)).